The primary structure comprises 388 residues: G2/mitotic-specific cyclin-B (388 aa).

It belongs to the cyclin family. Cyclin AB subfamily. As to quaternary structure, interacts with the CDK1 protein kinase to form a serine/threonine kinase holoenzyme complex also known as maturation promoting factor (MPF). The cyclin subunit imparts substrate specificity to the complex.

Functionally, essential for the control of the cell cycle at the G2/M (mitosis) transition. The chain is G2/mitotic-specific cyclin-B from Marthasterias glacialis (Spiny starfish).